Reading from the N-terminus, the 216-residue chain is 4-hydroxy-tetrahydrodipicolinate reductase (216 aa).

NAD(+) is bound by residues 9-12 (SGRM), 71-73 (GTT), and 95-98 (AYNF). His-127 (proton donor/acceptor) is an active-site residue. A (S)-2,3,4,5-tetrahydrodipicolinate-binding site is contributed by His-128. Residue Lys-131 participates in NAD(+) binding. Catalysis depends on Lys-131, which acts as the Proton donor. (S)-2,3,4,5-tetrahydrodipicolinate is bound at residue 137–138 (GT).

This sequence belongs to the DapB family. Homotetramer.

It is found in the cytoplasm. It carries out the reaction (S)-2,3,4,5-tetrahydrodipicolinate + NAD(+) + H2O = (2S,4S)-4-hydroxy-2,3,4,5-tetrahydrodipicolinate + NADH + H(+). The enzyme catalyses (S)-2,3,4,5-tetrahydrodipicolinate + NADP(+) + H2O = (2S,4S)-4-hydroxy-2,3,4,5-tetrahydrodipicolinate + NADPH + H(+). It participates in amino-acid biosynthesis; L-lysine biosynthesis via DAP pathway; (S)-tetrahydrodipicolinate from L-aspartate: step 4/4. Is inhibited by high concentrations of NADH. Functionally, catalyzes the conversion of 4-hydroxy-tetrahydrodipicolinate (HTPA) to tetrahydrodipicolinate. Uses NADPH as a reductant with much more efficiency than NADH. This is 4-hydroxy-tetrahydrodipicolinate reductase from Thermotoga maritima (strain ATCC 43589 / DSM 3109 / JCM 10099 / NBRC 100826 / MSB8).